The following is a 400-amino-acid chain: NADH-quinone oxidoreductase subunit D (400 aa).

This sequence belongs to the complex I 49 kDa subunit family. NDH-1 is composed of 14 different subunits. Subunits NuoB, C, D, E, F, and G constitute the peripheral sector of the complex.

It localises to the cell inner membrane. The catalysed reaction is a quinone + NADH + 5 H(+)(in) = a quinol + NAD(+) + 4 H(+)(out). NDH-1 shuttles electrons from NADH, via FMN and iron-sulfur (Fe-S) centers, to quinones in the respiratory chain. The immediate electron acceptor for the enzyme in this species is believed to be ubiquinone. Couples the redox reaction to proton translocation (for every two electrons transferred, four hydrogen ions are translocated across the cytoplasmic membrane), and thus conserves the redox energy in a proton gradient. In Granulibacter bethesdensis (strain ATCC BAA-1260 / CGDNIH1), this protein is NADH-quinone oxidoreductase subunit D.